The sequence spans 146 residues: Putative esterase DR_2321 (146 aa).

The protein belongs to the thioesterase PaaI family.

In Deinococcus radiodurans (strain ATCC 13939 / DSM 20539 / JCM 16871 / CCUG 27074 / LMG 4051 / NBRC 15346 / NCIMB 9279 / VKM B-1422 / R1), this protein is Putative esterase DR_2321.